The primary structure comprises 151 residues: Ribosome maturation factor RimP (151 aa).

Belongs to the RimP family.

It is found in the cytoplasm. In terms of biological role, required for maturation of 30S ribosomal subunits. In Mannheimia succiniciproducens (strain KCTC 0769BP / MBEL55E), this protein is Ribosome maturation factor RimP.